Here is an 86-residue protein sequence, read N- to C-terminus: Small nuclear ribonucleoprotein F (86 aa).

Ser-2 bears the N-acetylserine mark. One can recognise a Sm domain in the interval 6 to 78 (NPKPFLNGLT…VLYIRGVEEE (73 aa)).

This sequence belongs to the snRNP Sm proteins family. SmF/LSm6 subfamily. In terms of assembly, core component of the spliceosomal U1, U2, U4 and U5 small nuclear ribonucleoproteins (snRNPs), the building blocks of the spliceosome. Most spliceosomal snRNPs contain a common set of Sm proteins, SNRPB, SNRPD1, SNRPD2, SNRPD3, SNRPE, SNRPF and SNRPG that assemble in a heptameric protein ring on the Sm site of the small nuclear RNA to form the core snRNP. Component of the U1 snRNP. The U1 snRNP is composed of the U1 snRNA and the 7 core Sm proteins SNRPB, SNRPD1, SNRPD2, SNRPD3, SNRPE, SNRPF and SNRPG, and at least three U1 snRNP-specific proteins SNRNP70/U1-70K, SNRPA/U1-A and SNRPC/U1-C. Component of the U4/U6-U5 tri-snRNP complex composed of the U4, U6 and U5 snRNAs and at least PRPF3, PRPF4, PRPF6, PRPF8, PRPF31, SNRNP200, TXNL4A, SNRNP40, SNRPB, SNRPD1, SNRPD2, SNRPD3, SNRPE, SNRPF, SNRPG, DDX23, CD2BP2, PPIH, SNU13, EFTUD2, SART1 and USP39, plus LSM2, LSM3, LSM4, LSM5, LSM6, LSM7 and LSM8. Component of the U7 snRNP complex, or U7 Sm protein core complex, that is composed of the U7 snRNA and at least LSM10, LSM11, SNRPB, SNRPD3, SNRPE, SNRPF and SNRPG; the complex does not contain SNRPD1 and SNRPD2. Component of the minor spliceosome, which splices U12-type introns. Part of the SMN-Sm complex that contains SMN1, GEMIN2/SIP1, DDX20/GEMIN3, GEMIN4, GEMIN5, GEMIN6, GEMIN7, GEMIN8, STRAP/UNRIP and the Sm proteins SNRPB, SNRPD1, SNRPD2, SNRPD3, SNRPE, SNRPF and SNRPG; catalyzes core snRNPs assembly. Forms a 6S pICln-Sm complex composed of CLNS1A/pICln, SNRPD1, SNRPD2, SNRPE, SNRPF and SNRPG; ring-like structure where CLNS1A/pICln mimics additional Sm proteins and which is unable to assemble into the core snRNP. Interacts with GEMIN2 (via N-terminus); the interaction is direct. Interacts with SNRPD2; the interaction is direct. Interacts with SNRPE; the interaction is direct.

Its subcellular location is the cytoplasm. The protein resides in the cytosol. The protein localises to the nucleus. Plays a role in pre-mRNA splicing as a core component of the spliceosomal U1, U2, U4 and U5 small nuclear ribonucleoproteins (snRNPs), the building blocks of the spliceosome. Component of both the pre-catalytic spliceosome B complex and activated spliceosome C complexes. As a component of the minor spliceosome, involved in the splicing of U12-type introns in pre-mRNAs. As part of the U7 snRNP it is involved in histone 3'-end processing. The polypeptide is Small nuclear ribonucleoprotein F (SNRPF) (Homo sapiens (Human)).